The following is a 428-amino-acid chain: Ribosomal RNA small subunit methyltransferase B (428 aa).

S-adenosyl-L-methionine contacts are provided by residues 253–259 (CAAPGGK), Asp276, Asp302, and Asp321. Cys374 serves as the catalytic Nucleophile.

It belongs to the class I-like SAM-binding methyltransferase superfamily. RsmB/NOP family.

Its subcellular location is the cytoplasm. It carries out the reaction cytidine(967) in 16S rRNA + S-adenosyl-L-methionine = 5-methylcytidine(967) in 16S rRNA + S-adenosyl-L-homocysteine + H(+). Functionally, specifically methylates the cytosine at position 967 (m5C967) of 16S rRNA. This is Ribosomal RNA small subunit methyltransferase B from Citrobacter koseri (strain ATCC BAA-895 / CDC 4225-83 / SGSC4696).